Reading from the N-terminus, the 594-residue chain is Isocitrate dehydrogenase kinase/phosphatase (594 aa).

ATP-binding positions include 315–321 and K336; that span reads APGIRGM. D371 is a catalytic residue.

Belongs to the AceK family.

It localises to the cytoplasm. The enzyme catalyses L-seryl-[isocitrate dehydrogenase] + ATP = O-phospho-L-seryl-[isocitrate dehydrogenase] + ADP + H(+). Its function is as follows. Bifunctional enzyme which can phosphorylate or dephosphorylate isocitrate dehydrogenase (IDH) on a specific serine residue. This is a regulatory mechanism which enables bacteria to bypass the Krebs cycle via the glyoxylate shunt in response to the source of carbon. When bacteria are grown on glucose, IDH is fully active and unphosphorylated, but when grown on acetate or ethanol, the activity of IDH declines drastically concomitant with its phosphorylation. The chain is Isocitrate dehydrogenase kinase/phosphatase from Klebsiella pneumoniae (strain 342).